The chain runs to 246 residues: 4-hydroxy-tetrahydrodipicolinate reductase (246 aa).

Residue 9 to 14 (GNTGRM) participates in NAD(+) binding. NADP(+) is bound at residue arginine 36. NAD(+) is bound by residues 78 to 80 (GTT) and 104 to 107 (SPNM). Residue histidine 137 is the Proton donor/acceptor of the active site. Histidine 138 contacts (S)-2,3,4,5-tetrahydrodipicolinate. Lysine 141 functions as the Proton donor in the catalytic mechanism. A (S)-2,3,4,5-tetrahydrodipicolinate-binding site is contributed by 147-148 (GT).

It belongs to the DapB family.

The protein resides in the cytoplasm. The enzyme catalyses (S)-2,3,4,5-tetrahydrodipicolinate + NAD(+) + H2O = (2S,4S)-4-hydroxy-2,3,4,5-tetrahydrodipicolinate + NADH + H(+). It catalyses the reaction (S)-2,3,4,5-tetrahydrodipicolinate + NADP(+) + H2O = (2S,4S)-4-hydroxy-2,3,4,5-tetrahydrodipicolinate + NADPH + H(+). It participates in amino-acid biosynthesis; L-lysine biosynthesis via DAP pathway; (S)-tetrahydrodipicolinate from L-aspartate: step 4/4. Functionally, catalyzes the conversion of 4-hydroxy-tetrahydrodipicolinate (HTPA) to tetrahydrodipicolinate. In Chlamydia muridarum (strain MoPn / Nigg), this protein is 4-hydroxy-tetrahydrodipicolinate reductase.